The primary structure comprises 517 residues: Ribose import ATP-binding protein RbsA 1 (517 aa).

2 ABC transporter domains span residues 11–251 (LEMR…VGRD) and 263–507 (YDPG…ALAT). Residue 43-50 (GENGAGKS) participates in ATP binding.

This sequence belongs to the ABC transporter superfamily. Ribose importer (TC 3.A.1.2.1) family. As to quaternary structure, the complex is composed of an ATP-binding protein (RbsA), two transmembrane proteins (RbsC) and a solute-binding protein (RbsB).

It localises to the cell inner membrane. The catalysed reaction is D-ribose(out) + ATP + H2O = D-ribose(in) + ADP + phosphate + H(+). In terms of biological role, part of the ABC transporter complex RbsABC involved in ribose import. Responsible for energy coupling to the transport system. This chain is Ribose import ATP-binding protein RbsA 1, found in Burkholderia ambifaria (strain ATCC BAA-244 / DSM 16087 / CCUG 44356 / LMG 19182 / AMMD) (Burkholderia cepacia (strain AMMD)).